The chain runs to 324 residues: Quinolinate synthase 2 (324 aa).

Iminosuccinate is bound by residues His48 and Ser66. Cys111 serves as a coordination point for [4Fe-4S] cluster. Residues Tyr137 to Asn139 and Ser154 contribute to the iminosuccinate site. Cys196 contacts [4Fe-4S] cluster. Iminosuccinate-binding positions include His222–Glu224 and Thr239. Cys282 provides a ligand contact to [4Fe-4S] cluster.

The protein belongs to the quinolinate synthase family. Type 2 subfamily. Requires [4Fe-4S] cluster as cofactor.

The protein localises to the cytoplasm. The enzyme catalyses iminosuccinate + dihydroxyacetone phosphate = quinolinate + phosphate + 2 H2O + H(+). It participates in cofactor biosynthesis; NAD(+) biosynthesis; quinolinate from iminoaspartate: step 1/1. Catalyzes the condensation of iminoaspartate with dihydroxyacetone phosphate to form quinolinate. This chain is Quinolinate synthase 2, found in Mesorhizobium japonicum (strain LMG 29417 / CECT 9101 / MAFF 303099) (Mesorhizobium loti (strain MAFF 303099)).